We begin with the raw amino-acid sequence, 565 residues long: O-fucosyltransferase 7 (565 aa).

Residues 17–37 traverse the membrane as a helical; Signal-anchor for type II membrane protein segment; sequence VLIWAICVMTLLCFLTVHIYV. 5 N-linked (GlcNAc...) asparagine glycosylation sites follow: asparagine 62, asparagine 73, asparagine 104, asparagine 124, and asparagine 190. 327–329 serves as a coordination point for substrate; sequence HLR. N-linked (GlcNAc...) asparagine glycosylation is present at asparagine 441. The disordered stretch occupies residues 515 to 565; it reads NEIHKTRQGSPRRRKGPASGTKGLERHRSEESFYENPLPDCLCQRDPSKAR. Over residues 520-530 the composition is skewed to basic residues; the sequence is TRQGSPRRRKG.

This sequence belongs to the glycosyltransferase GT106 family.

It localises to the membrane. The protein operates within glycan metabolism. The polypeptide is O-fucosyltransferase 7 (Arabidopsis thaliana (Mouse-ear cress)).